A 225-amino-acid polypeptide reads, in one-letter code: Ribose-5-phosphate isomerase A (225 aa).

Substrate is bound by residues 33–36 (TGST), 84–87 (DGAD), and 96–99 (KGGG). The active-site Proton acceptor is glutamate 105. Lysine 123 is a binding site for substrate.

This sequence belongs to the ribose 5-phosphate isomerase family. Homodimer.

It carries out the reaction aldehydo-D-ribose 5-phosphate = D-ribulose 5-phosphate. The protein operates within carbohydrate degradation; pentose phosphate pathway; D-ribose 5-phosphate from D-ribulose 5-phosphate (non-oxidative stage): step 1/1. In terms of biological role, catalyzes the reversible conversion of ribose-5-phosphate to ribulose 5-phosphate. The polypeptide is Ribose-5-phosphate isomerase A (Halobacterium salinarum (strain ATCC 29341 / DSM 671 / R1)).